The primary structure comprises 258 residues: Ribosomal RNA small subunit methyltransferase J (258 aa).

Residues 107–108, 123–124, and Asp177 each bind S-adenosyl-L-methionine; these read RD and ER.

This sequence belongs to the methyltransferase superfamily. RsmJ family.

Its subcellular location is the cytoplasm. The catalysed reaction is guanosine(1516) in 16S rRNA + S-adenosyl-L-methionine = N(2)-methylguanosine(1516) in 16S rRNA + S-adenosyl-L-homocysteine + H(+). In terms of biological role, specifically methylates the guanosine in position 1516 of 16S rRNA. This Stutzerimonas stutzeri (strain A1501) (Pseudomonas stutzeri) protein is Ribosomal RNA small subunit methyltransferase J.